The chain runs to 381 residues: tRNA pseudouridine synthase D (381 aa).

The Nucleophile role is filled by D81. In terms of domain architecture, TRUD spans 160-335 (GMPNYFGSQR…TLGSRRFFWV (176 aa)).

This sequence belongs to the pseudouridine synthase TruD family.

The catalysed reaction is uridine(13) in tRNA = pseudouridine(13) in tRNA. In terms of biological role, responsible for synthesis of pseudouridine from uracil-13 in transfer RNAs. The sequence is that of tRNA pseudouridine synthase D from Helicobacter pylori (strain J99 / ATCC 700824) (Campylobacter pylori J99).